The following is a 78-amino-acid chain: Translational regulator CsrA (78 aa).

Belongs to the CsrA/RsmA family. As to quaternary structure, homodimer; the beta-strands of each monomer intercalate to form a hydrophobic core, while the alpha-helices form wings that extend away from the core.

The protein localises to the cytoplasm. Functionally, a translational regulator that binds mRNA to regulate translation initiation and/or mRNA stability. Usually binds in the 5'-UTR at or near the Shine-Dalgarno sequence preventing ribosome-binding, thus repressing translation. Its main target seems to be the major flagellin gene, while its function is anatagonized by FliW. This Geobacter metallireducens (strain ATCC 53774 / DSM 7210 / GS-15) protein is Translational regulator CsrA.